A 203-amino-acid chain; its full sequence is Peptidyl-tRNA hydrolase (203 aa).

Tyrosine 14 is a binding site for tRNA. The active-site Proton acceptor is the histidine 19. Residues tyrosine 64, asparagine 66, and asparagine 112 each coordinate tRNA.

This sequence belongs to the PTH family. As to quaternary structure, monomer.

It localises to the cytoplasm. The catalysed reaction is an N-acyl-L-alpha-aminoacyl-tRNA + H2O = an N-acyl-L-amino acid + a tRNA + H(+). Hydrolyzes ribosome-free peptidyl-tRNAs (with 1 or more amino acids incorporated), which drop off the ribosome during protein synthesis, or as a result of ribosome stalling. Functionally, catalyzes the release of premature peptidyl moieties from peptidyl-tRNA molecules trapped in stalled 50S ribosomal subunits, and thus maintains levels of free tRNAs and 50S ribosomes. The polypeptide is Peptidyl-tRNA hydrolase (Methylobacterium sp. (strain 4-46)).